We begin with the raw amino-acid sequence, 419 residues long: Transcription termination factor Rho (419 aa).

Residues D48–K123 enclose the Rho RNA-BD domain. RNA-binding stretches follow at residues G61–R66, D78–Y80, and E108–Y110. ATP-binding positions include G169–G174, K181–M186, and R212. Residues V284–G288 are RNA-binding 2.

This sequence belongs to the Rho family. In terms of assembly, homohexamer. The homohexamer assembles into an open ring structure.

In terms of biological role, facilitates transcription termination by a mechanism that involves Rho binding to the nascent RNA, activation of Rho's RNA-dependent ATPase activity, and release of the mRNA from the DNA template. This Salmonella typhi protein is Transcription termination factor Rho.